We begin with the raw amino-acid sequence, 145 residues long: Large ribosomal subunit protein uL15 (145 aa).

The interval Met-1–Ser-42 is disordered. Residues Arg-13–Gly-26 are compositionally biased toward basic residues.

Belongs to the universal ribosomal protein uL15 family. As to quaternary structure, part of the 50S ribosomal subunit.

In terms of biological role, binds to the 23S rRNA. The chain is Large ribosomal subunit protein uL15 from Metamycoplasma arthritidis (strain 158L3-1) (Mycoplasma arthritidis).